Consider the following 135-residue polypeptide: Large ribosomal subunit protein uL16c (135 aa).

The protein belongs to the universal ribosomal protein uL16 family. Part of the 50S ribosomal subunit.

The protein resides in the plastid. Its subcellular location is the chloroplast. This is Large ribosomal subunit protein uL16c from Coffea arabica (Arabian coffee).